Here is a 236-residue protein sequence, read N- to C-terminus: 2,3,4,5-tetrahydropyridine-2,6-dicarboxylate N-acetyltransferase (236 aa).

The protein belongs to the transferase hexapeptide repeat family. DapH subfamily.

It catalyses the reaction (S)-2,3,4,5-tetrahydrodipicolinate + acetyl-CoA + H2O = L-2-acetamido-6-oxoheptanedioate + CoA. It participates in amino-acid biosynthesis; L-lysine biosynthesis via DAP pathway; LL-2,6-diaminopimelate from (S)-tetrahydrodipicolinate (acetylase route): step 1/3. Its function is as follows. Catalyzes the transfer of an acetyl group from acetyl-CoA to tetrahydrodipicolinate. In Clostridium botulinum (strain Langeland / NCTC 10281 / Type F), this protein is 2,3,4,5-tetrahydropyridine-2,6-dicarboxylate N-acetyltransferase.